The primary structure comprises 304 residues: Oxygen-dependent coproporphyrinogen-III oxidase (304 aa).

Serine 94 is a substrate binding site. The a divalent metal cation site is built by histidine 98 and histidine 108. Catalysis depends on histidine 108, which acts as the Proton donor. 110–112 serves as a coordination point for substrate; the sequence is NVR. Positions 147 and 177 each coordinate a divalent metal cation. The tract at residues 242–277 is important for dimerization; sequence YVEFNLVYDRGTLFGLQTGGRTESILMSMPPLVRWE. Substrate is bound at residue 260-262; the sequence is GGR.

It belongs to the aerobic coproporphyrinogen-III oxidase family. Homodimer. It depends on a divalent metal cation as a cofactor.

Its subcellular location is the cytoplasm. The enzyme catalyses coproporphyrinogen III + O2 + 2 H(+) = protoporphyrinogen IX + 2 CO2 + 2 H2O. It functions in the pathway porphyrin-containing compound metabolism; protoporphyrin-IX biosynthesis; protoporphyrinogen-IX from coproporphyrinogen-III (O2 route): step 1/1. In terms of biological role, involved in the heme biosynthesis. Catalyzes the aerobic oxidative decarboxylation of propionate groups of rings A and B of coproporphyrinogen-III to yield the vinyl groups in protoporphyrinogen-IX. In Shewanella piezotolerans (strain WP3 / JCM 13877), this protein is Oxygen-dependent coproporphyrinogen-III oxidase.